Here is a 191-residue protein sequence, read N- to C-terminus: Probable chemoreceptor glutamine deamidase CheD (191 aa).

Belongs to the CheD family.

It carries out the reaction L-glutaminyl-[protein] + H2O = L-glutamyl-[protein] + NH4(+). In terms of biological role, probably deamidates glutamine residues to glutamate on methyl-accepting chemotaxis receptors (MCPs), playing an important role in chemotaxis. The chain is Probable chemoreceptor glutamine deamidase CheD from Hydrogenovibrio crunogenus (strain DSM 25203 / XCL-2) (Thiomicrospira crunogena).